The following is a 426-amino-acid chain: CinA-like protein (426 aa).

The protein belongs to the CinA family.

The sequence is that of CinA-like protein from Gloeobacter violaceus (strain ATCC 29082 / PCC 7421).